The following is a 516-amino-acid chain: Zinc finger protein 83 (516 aa).

Residues 1 to 20 (MHGRKDDAQKQPVKNQLGLN) form a disordered region. The C2H2-type 1; degenerate zinc-finger motif lies at 93-115 (YKCSERGKAFHQGLHFTIHQIIH). 14 consecutive C2H2-type zinc fingers follow at residues 121 to 143 (FKCDICGKIFNKKSNLASHQRIH), 149 to 171 (YKCNECGKVFHNMSHLAQHRRIH), 177 to 199 (YKCNECGKVFNQISHLAQHQRIH), 205 to 227 (YKCNECGKVFHQISHLAQHRTIH), 233 to 255 (YECNKCGKVFSRNSYLVQHLIIH), 261 to 283 (YRCNVCGKVFHHISHLAQHQRIH), 289 to 311 (YKCNECGKVFSHKSSLVNHWRIH), 317 to 339 (YKCNECGKVFSHKSSLVNHWRIH), 345 to 367 (YKCNECGKVFSRNSYLAQHLIIH), 373 to 395 (YKCDECDKAFSQNSHLVQHHRIH), 401 to 423 (YKCDECGKVFSQNSYLAYHWRIH), 429 to 451 (YKCNECGKVFGLNSSLAHHRKIH), 457 to 479 (FKCNECGKAFSMRSSLTNHHAIH), and 485 to 507 (FKCNECGKLFRDNSYLVRHQRFH).

It belongs to the krueppel C2H2-type zinc-finger protein family.

It is found in the nucleus. Its function is as follows. May be involved in transcriptional regulation. In Homo sapiens (Human), this protein is Zinc finger protein 83 (ZNF83).